Consider the following 210-residue polypeptide: N-(5'-phosphoribosyl)anthranilate isomerase (210 aa).

This sequence belongs to the TrpF family.

The catalysed reaction is N-(5-phospho-beta-D-ribosyl)anthranilate = 1-(2-carboxyphenylamino)-1-deoxy-D-ribulose 5-phosphate. The protein operates within amino-acid biosynthesis; L-tryptophan biosynthesis; L-tryptophan from chorismate: step 3/5. The sequence is that of N-(5'-phosphoribosyl)anthranilate isomerase (TRP1) from Eremothecium gossypii (strain ATCC 10895 / CBS 109.51 / FGSC 9923 / NRRL Y-1056) (Yeast).